Consider the following 302-residue polypeptide: MLGLCGQRLPAAWVLLLLPFLPLLLLAAPAPHRASYKPVIVVHGLFDSSYSFRHLLEYINETHPGTVVTVLDLFDGRESLRPLWEQVQGFREAVVPIMAKAPQGVHLICYSQGGLVCRALLSVMDDHNVDSFISLSSPQMGQYGDTDYLKWLFPTSMRSNLYRICYSPWGQEFSICNYWHDPHHDDLYLNASSFLALINGERDHPNATVWRKNFLRVGHLVLIGGPDDGVITPWQSSFFGFYDANETVLEMEEQLVYLRDSFGLKTLLARGAIVRCPMAGISHTAWHSNRTLYETCIEPWLS.

A signal peptide spans methionine 1 to alanine 27. Asparagine 60 carries N-linked (GlcNAc...) asparagine glycosylation. 2 disulfide bridges follow: cysteine 109–cysteine 117 and cysteine 165–cysteine 176. Residue serine 111 is the Nucleophile of the active site. Asparagine 190 and asparagine 206 each carry an N-linked (GlcNAc...) asparagine glycan. The active site involves aspartate 228. An N-linked (GlcNAc...) asparagine glycan is attached at asparagine 245. An intrachain disulfide couples cysteine 276 to cysteine 296. Histidine 283 is a catalytic residue. The N-linked (GlcNAc...) asparagine glycan is linked to asparagine 289.

The protein belongs to the palmitoyl-protein thioesterase family. Broadly expressed, with highest levels in skeletal muscle.

The protein resides in the lysosome. The enzyme catalyses hexadecanoyl-CoA + H2O = hexadecanoate + CoA + H(+). It catalyses the reaction S-hexadecanoyl-N-acetylcysteamine + H2O = N-acetylcysteamine + hexadecanoate + H(+). Functionally, catalyzes the cleavage of thioester bonds from S-palmitoyl-CoA or S-palmitoyl-N-acetylcysteamine (unbranched structures) but does not have activity against palmitoylcysteine or palmitoylated proteins, branched structures or bulky head groups. Conversely, hydrolyzes both long and short chain fatty acyl-CoA substrate. Catalytically inactive due to lack of active site His-283. The polypeptide is Lysosomal thioesterase PPT2 (Homo sapiens (Human)).